The following is a 371-amino-acid chain: Alanine racemase (371 aa).

The active-site Proton acceptor; specific for D-alanine is the Lys-39. At Lys-39 the chain carries N6-(pyridoxal phosphate)lysine. Arg-137 is a binding site for substrate. Tyr-266 acts as the Proton acceptor; specific for L-alanine in catalysis. Met-314 contacts substrate.

This sequence belongs to the alanine racemase family. Requires pyridoxal 5'-phosphate as cofactor.

It catalyses the reaction L-alanine = D-alanine. The protein operates within amino-acid biosynthesis; D-alanine biosynthesis; D-alanine from L-alanine: step 1/1. Functionally, catalyzes the interconversion of L-alanine and D-alanine. May also act on other amino acids. The polypeptide is Alanine racemase (alr) (Desulfovibrio desulfuricans (strain ATCC 27774 / DSM 6949 / MB)).